The following is a 423-amino-acid chain: Serine--tRNA ligase (423 aa).

231–233 lines the L-serine pocket; it reads TGE. 262-264 is an ATP binding site; it reads RSE. Glu285 is a binding site for L-serine. 349-352 contributes to the ATP binding site; the sequence is EISS. Ser385 provides a ligand contact to L-serine.

The protein belongs to the class-II aminoacyl-tRNA synthetase family. Type-1 seryl-tRNA synthetase subfamily. Homodimer. The tRNA molecule binds across the dimer.

The protein resides in the cytoplasm. It catalyses the reaction tRNA(Ser) + L-serine + ATP = L-seryl-tRNA(Ser) + AMP + diphosphate + H(+). It carries out the reaction tRNA(Sec) + L-serine + ATP = L-seryl-tRNA(Sec) + AMP + diphosphate + H(+). The protein operates within aminoacyl-tRNA biosynthesis; selenocysteinyl-tRNA(Sec) biosynthesis; L-seryl-tRNA(Sec) from L-serine and tRNA(Sec): step 1/1. Its function is as follows. Catalyzes the attachment of serine to tRNA(Ser). Is also able to aminoacylate tRNA(Sec) with serine, to form the misacylated tRNA L-seryl-tRNA(Sec), which will be further converted into selenocysteinyl-tRNA(Sec). This chain is Serine--tRNA ligase, found in Coxiella burnetii (strain CbuG_Q212) (Coxiella burnetii (strain Q212)).